The primary structure comprises 351 residues: S-adenosylmethionine:tRNA ribosyltransferase-isomerase (351 aa).

This sequence belongs to the QueA family. In terms of assembly, monomer.

The protein resides in the cytoplasm. It carries out the reaction 7-aminomethyl-7-carbaguanosine(34) in tRNA + S-adenosyl-L-methionine = epoxyqueuosine(34) in tRNA + adenine + L-methionine + 2 H(+). The protein operates within tRNA modification; tRNA-queuosine biosynthesis. In terms of biological role, transfers and isomerizes the ribose moiety from AdoMet to the 7-aminomethyl group of 7-deazaguanine (preQ1-tRNA) to give epoxyqueuosine (oQ-tRNA). The sequence is that of S-adenosylmethionine:tRNA ribosyltransferase-isomerase from Fusobacterium nucleatum subsp. nucleatum (strain ATCC 25586 / DSM 15643 / BCRC 10681 / CIP 101130 / JCM 8532 / KCTC 2640 / LMG 13131 / VPI 4355).